Here is a 410-residue protein sequence, read N- to C-terminus: LL-diaminopimelate aminotransferase (410 aa).

Substrate contacts are provided by Tyr15 and Gly42. Pyridoxal 5'-phosphate-binding positions include Tyr72, 108-109 (AK), Tyr132, Asn187, Tyr218, and 246-248 (SFS). 3 residues coordinate substrate: Lys109, Tyr132, and Asn187. Lys249 is modified (N6-(pyridoxal phosphate)lysine). Pyridoxal 5'-phosphate-binding residues include Arg257 and Asn292. Substrate contacts are provided by Asn292 and Arg388.

The protein belongs to the class-I pyridoxal-phosphate-dependent aminotransferase family. LL-diaminopimelate aminotransferase subfamily. In terms of assembly, homodimer. Requires pyridoxal 5'-phosphate as cofactor.

It catalyses the reaction (2S,6S)-2,6-diaminopimelate + 2-oxoglutarate = (S)-2,3,4,5-tetrahydrodipicolinate + L-glutamate + H2O + H(+). The protein operates within amino-acid biosynthesis; L-lysine biosynthesis via DAP pathway; LL-2,6-diaminopimelate from (S)-tetrahydrodipicolinate (aminotransferase route): step 1/1. In terms of biological role, involved in the synthesis of meso-diaminopimelate (m-DAP or DL-DAP), required for both lysine and peptidoglycan biosynthesis. Catalyzes the direct conversion of tetrahydrodipicolinate to LL-diaminopimelate. This is LL-diaminopimelate aminotransferase from Picosynechococcus sp. (strain ATCC 27264 / PCC 7002 / PR-6) (Agmenellum quadruplicatum).